We begin with the raw amino-acid sequence, 218 residues long: Protein-methionine-sulfoxide reductase heme-binding subunit MsrQ (218 aa).

5 helical membrane passes run 12 to 32, 82 to 102, 118 to 138, 150 to 170, and 180 to 200; these read TLIK…LALF, MLGL…LWFD, PFIT…ITST, WQWL…HYWW, and QPII…FWAW.

This sequence belongs to the MsrQ family. Heterodimer of a catalytic subunit (MsrP) and a heme-binding subunit (MsrQ). FMN serves as cofactor. The cofactor is heme b.

It localises to the cell inner membrane. Functionally, part of the MsrPQ system that repairs oxidized periplasmic proteins containing methionine sulfoxide residues (Met-O), using respiratory chain electrons. Thus protects these proteins from oxidative-stress damage caused by reactive species of oxygen and chlorine generated by the host defense mechanisms. MsrPQ is essential for the maintenance of envelope integrity under bleach stress, rescuing a wide series of structurally unrelated periplasmic proteins from methionine oxidation. MsrQ provides electrons for reduction to the reductase catalytic subunit MsrP, using the quinone pool of the respiratory chain. The sequence is that of Protein-methionine-sulfoxide reductase heme-binding subunit MsrQ from Herminiimonas arsenicoxydans.